The following is a 131-amino-acid chain: Arsenate reductase 2 (131 aa).

Catalysis depends on nucleophile residues cysteine 10, cysteine 82, and cysteine 89. 2 disulfides stabilise this stretch: cysteine 10-cysteine 82 and cysteine 82-cysteine 89.

The protein belongs to the low molecular weight phosphotyrosine protein phosphatase family. Thioredoxin-coupled ArsC subfamily.

The protein resides in the cytoplasm. It carries out the reaction arsenate + [thioredoxin]-dithiol + H(+) = arsenite + [thioredoxin]-disulfide + H2O. Catalyzes the reduction of arsenate [As(V)] to arsenite [As(III)]. The sequence is that of Arsenate reductase 2 from Staphylococcus haemolyticus (strain JCSC1435).